The chain runs to 355 residues: ISSQQTIPPSAKYGGRHTVTMIPGDGIGPELMLHVKSVFRHACVPVDFEEVHVSSNADEEDIRNAIMAIRRNRVALKGNIETNHNLPPSHKSRNNILRTSLDLYANVIHCKSLPGVVTRHKDIDILIVRENTEGEYSSLEHESVAGVVESLKIITKAKSLRIAEYAFKLAQESGRKKVTAVHKANIMKLGDGLFLQCCREVAARYPQITFENMIVDNTTMQLVSRPQQFDVMVMPNLYGNIVNNVCAGLVGGPGLVAGANYGHVYAVFETATRNTGKSIANKNIANPTATLLASCMMLDHLKLHSYATSIRKAVLASMDNENMHTPDIGGQGTTSEAIQDIIRHIRVINGRAVEA.

A transit peptide (mitochondrion) is located at residue Ile-1. Citrate contacts are provided by Thr-82 and Asn-95. Positions 98, 129, and 216 each coordinate substrate. Asp-216 provides a ligand contact to Mn(2+). ADP-binding residues include Asn-274, Thr-275, and Asn-286.

Belongs to the isocitrate and isopropylmalate dehydrogenases family. Heterooligomer of subunits alpha (IDH3A), beta (IDH3B), and gamma (IDH3G) in the apparent ratio of 2:1:1. The heterodimer containing one IDH3A and one IDH3B subunit and the heterodimer containing one IDH3A and one IDH3G subunit assemble into a heterotetramer (which contains two subunits of IDH3A, one of IDH3B and one of IDH3G) and further into the heterooctamer. Requires Mg(2+) as cofactor. Mn(2+) serves as cofactor.

Its subcellular location is the mitochondrion. Its activity is regulated as follows. The heterotetramer and the heterodimer composed of IDH3A and IDH3G subunits can be allosterically activated by citrate (CIT) or/and ADP, and the two activators can act independently or synergistically. The heterodimer composed of IDH3A and IDH3B subunits cannot be allosterically regulated and the allosteric regulation of the heterotetramer is through the IDH3G subunit and not the IDH3B subunit. The IDH3G subunit contains the allosteric site which consists of a CIT-binding site and an ADP-binding site, and the binding of CIT and ADP causes conformational changes at the allosteric site which are transmitted to the active site in the catalytic subunit (IDH3A) through a cascade of conformational changes at the heterodimer interface, leading to stabilization of the isocitrate-binding at the active site and thus activation of the enzyme. ATP can activate the heterotetramer and the heterodimer composed of IDH3A and IDH3G subunits at low concentrations but inhibits their activities at high concentrations, whereas ATP exhibits only inhibitory effect on the heterodimer composed of IDH3A and IDH3B subunits. Functionally, regulatory subunit which plays a role in the allosteric regulation of the enzyme catalyzing the decarboxylation of isocitrate (ICT) into alpha-ketoglutarate. The heterodimer composed of the alpha (IDH3A) and beta (IDH3B) subunits and the heterodimer composed of the alpha (IDH3A) and gamma (IDH3G) subunits, have considerable basal activity but the full activity of the heterotetramer (containing two subunits of IDH3A, one of IDH3B and one of IDH3G) requires the assembly and cooperative function of both heterodimers. This is Isocitrate dehydrogenase [NAD] subunit gamma, mitochondrial (IDH3G) from Macaca fascicularis (Crab-eating macaque).